The sequence spans 104 residues: Flagellar hook-basal body complex protein FliE (104 aa).

It belongs to the FliE family.

It localises to the bacterial flagellum basal body. The sequence is that of Flagellar hook-basal body complex protein FliE from Pectobacterium carotovorum subsp. carotovorum (strain PC1).